A 297-amino-acid chain; its full sequence is Glutamyl-Q tRNA(Asp) synthetase (297 aa).

Residues 9-13 (RFAPS) and Glu45 contribute to the L-glutamate site. Positions 12–22 (PSPTGPLHFGS) match the 'HIGH' region motif. Cys101, Cys103, and Cys118 together coordinate Zn(2+). L-glutamate contacts are provided by Tyr170 and Arg188. Residues 226–230 (KLSKS) carry the 'KMSKS' region motif. Position 229 (Lys229) interacts with ATP.

The protein belongs to the class-I aminoacyl-tRNA synthetase family. GluQ subfamily. Requires Zn(2+) as cofactor.

Functionally, catalyzes the tRNA-independent activation of glutamate in presence of ATP and the subsequent transfer of glutamate onto a tRNA(Asp). Glutamate is transferred on the 2-amino-5-(4,5-dihydroxy-2-cyclopenten-1-yl) moiety of the queuosine in the wobble position of the QUC anticodon. This Xanthomonas campestris pv. campestris (strain 8004) protein is Glutamyl-Q tRNA(Asp) synthetase.